The primary structure comprises 393 residues: CCA-adding enzyme (393 aa).

Residues Gly27 and Arg30 each coordinate ATP. Positions 27 and 30 each coordinate CTP. 2 residues coordinate Mg(2+): Asp40 and Asp42. ATP contacts are provided by Arg111, Asp154, Arg157, Arg160, and Arg163. CTP is bound by residues Arg111, Asp154, Arg157, Arg160, and Arg163.

This sequence belongs to the tRNA nucleotidyltransferase/poly(A) polymerase family. Bacterial CCA-adding enzyme type 3 subfamily. Homodimer. Mg(2+) is required as a cofactor.

The enzyme catalyses a tRNA precursor + 2 CTP + ATP = a tRNA with a 3' CCA end + 3 diphosphate. The catalysed reaction is a tRNA with a 3' CCA end + 2 CTP + ATP = a tRNA with a 3' CCACCA end + 3 diphosphate. Its function is as follows. Catalyzes the addition and repair of the essential 3'-terminal CCA sequence in tRNAs without using a nucleic acid template. Adds these three nucleotides in the order of C, C, and A to the tRNA nucleotide-73, using CTP and ATP as substrates and producing inorganic pyrophosphate. tRNA 3'-terminal CCA addition is required both for tRNA processing and repair. Also involved in tRNA surveillance by mediating tandem CCA addition to generate a CCACCA at the 3' terminus of unstable tRNAs. While stable tRNAs receive only 3'-terminal CCA, unstable tRNAs are marked with CCACCA and rapidly degraded. The sequence is that of CCA-adding enzyme from Listeria monocytogenes serotype 4a (strain HCC23).